The following is a 487-amino-acid chain: uncharacterized protein (487 aa).

Disordered stretches follow at residues 35-153, 237-345, and 358-395; these read VSRK…SGDQ, NTTK…AKAL, and QKRK…SSAA. Over residues 54-96 the composition is skewed to acidic residues; it reads FDQEDILDTVPEQTDENEDEAGDDELESEKEELDYDEEEDDED. The segment covering 97 to 132 has biased composition (basic and acidic residues); that stretch reads RRERTSRYTSEKKGSRKDSVEGDENKKENGQDETKR. The segment covering 241–253 has biased composition (basic residues); the sequence is SKSRGRDTRKRRS. Positions 254 to 264 are enriched in low complexity; sequence SSYSSTSSSSD. 2 stretches are compositionally biased toward basic and acidic residues: residues 273 to 338 and 358 to 383; these read SRSD…KHSA and QKRK…KKEV. Over residues 385–395 the composition is skewed to low complexity; sequence TTVSTNTSSAA.

This is an uncharacterized protein from Caenorhabditis elegans.